The following is a 418-amino-acid chain: Imidazolonepropionase (418 aa).

Fe(3+)-binding residues include His-80 and His-82. Zn(2+)-binding residues include His-80 and His-82. Arg-89, Tyr-152, and His-185 together coordinate 4-imidazolone-5-propanoate. N-formimidoyl-L-glutamate is bound at residue Tyr-152. A Fe(3+)-binding site is contributed by His-250. Position 250 (His-250) interacts with Zn(2+). Gln-253 serves as a coordination point for 4-imidazolone-5-propanoate. Asp-325 is a binding site for Fe(3+). Asp-325 lines the Zn(2+) pocket. Asn-327 and Gly-329 together coordinate N-formimidoyl-L-glutamate. Residue Ser-330 participates in 4-imidazolone-5-propanoate binding.

This sequence belongs to the metallo-dependent hydrolases superfamily. HutI family. Zn(2+) serves as cofactor. Requires Fe(3+) as cofactor.

The protein resides in the cytoplasm. It carries out the reaction 4-imidazolone-5-propanoate + H2O = N-formimidoyl-L-glutamate. It participates in amino-acid degradation; L-histidine degradation into L-glutamate; N-formimidoyl-L-glutamate from L-histidine: step 3/3. Its function is as follows. Catalyzes the hydrolytic cleavage of the carbon-nitrogen bond in imidazolone-5-propanoate to yield N-formimidoyl-L-glutamate. It is the third step in the universal histidine degradation pathway. This Solibacter usitatus (strain Ellin6076) protein is Imidazolonepropionase.